The chain runs to 385 residues: S-adenosylmethionine synthase (385 aa).

Residue His-16 participates in ATP binding. Asp-18 provides a ligand contact to Mg(2+). Glu-44 serves as a coordination point for K(+). L-methionine-binding residues include Glu-57 and Gln-100. The flexible loop stretch occupies residues 100-110 (QSPDINQGVDR). ATP contacts are provided by residues 164 to 166 (DGK), 230 to 231 (KF), Asp-239, 245 to 246 (RK), Ala-262, and Lys-266. Asp-239 serves as a coordination point for L-methionine. Lys-270 contributes to the L-methionine binding site.

This sequence belongs to the AdoMet synthase family. In terms of assembly, homotetramer; dimer of dimers. Mg(2+) is required as a cofactor. The cofactor is K(+).

The protein localises to the cytoplasm. It carries out the reaction L-methionine + ATP + H2O = S-adenosyl-L-methionine + phosphate + diphosphate. Its pathway is amino-acid biosynthesis; S-adenosyl-L-methionine biosynthesis; S-adenosyl-L-methionine from L-methionine: step 1/1. In terms of biological role, catalyzes the formation of S-adenosylmethionine (AdoMet) from methionine and ATP. The overall synthetic reaction is composed of two sequential steps, AdoMet formation and the subsequent tripolyphosphate hydrolysis which occurs prior to release of AdoMet from the enzyme. The sequence is that of S-adenosylmethionine synthase from Helicobacter pylori (strain HPAG1).